Reading from the N-terminus, the 968-residue chain is Serine/threonine-protein kinase apg-1 (968 aa).

One can recognise a Protein kinase domain in the interval 24 to 329; the sequence is FVIDQEIGKG…FEDLFNHPVV (306 aa). Residues 30–38 and K53 each bind ATP; that span reads IGKGSFAKV. D167 functions as the Proton acceptor in the catalytic mechanism. Disordered regions lie at residues 334–500, 528–585, 884–906, and 939–968; these read PGLV…ERAA, MYPQ…LGTS, LPKR…LSDE, and ASKA…SVPA. 3 stretches are compositionally biased toward basic and acidic residues: residues 350-361, 371-380, and 417-431; these read LKEERPVSRAED, LRKDLADREG, and PRED…KEAA. 3 stretches are compositionally biased toward polar residues: residues 441–452, 528–538, and 545–557; these read VQPSTSAPTRPS, MYPQQPQSPKS, and ATQQ…TSGA.

Belongs to the protein kinase superfamily. Ser/Thr protein kinase family. APG1/unc-51/ULK1 subfamily. Homodimer. Forms a ternary complex with ATG13 and ATG17.

The protein resides in the cytoplasm. It localises to the preautophagosomal structure membrane. The enzyme catalyses L-seryl-[protein] + ATP = O-phospho-L-seryl-[protein] + ADP + H(+). It carries out the reaction L-threonyl-[protein] + ATP = O-phospho-L-threonyl-[protein] + ADP + H(+). Functionally, serine/threonine protein kinase involved in the cytoplasm to vacuole transport (Cvt) and found to be essential in autophagy, where it is required for the formation of autophagosomes. Involved in the clearance of protein aggregates which cannot be efficiently cleared by the proteasome. Required for selective autophagic degradation of the nucleus (nucleophagy) as well as for mitophagy which contributes to regulate mitochondrial quantity and quality by eliminating the mitochondria to a basal level to fulfill cellular energy requirements and preventing excess ROS production. Also involved in endoplasmic reticulum-specific autophagic process, in selective removal of ER-associated degradation (ERAD) substrates. Plays a key role in ATG9 and ATG23 cycling through the pre-autophagosomal structure and is necessary to promote ATG18 binding to ATG9 through phosphorylation of ATG9. Catalyzes phosphorylation of ATG4, decreasing the interaction between ATG4 and ATG8 and impairing deconjugation of PE-conjugated forms of ATG8. This is Serine/threonine-protein kinase apg-1 from Neurospora crassa (strain ATCC 24698 / 74-OR23-1A / CBS 708.71 / DSM 1257 / FGSC 987).